The sequence spans 77 residues: Acyl carrier protein (77 aa).

Positions 1–76 (MSLEDDVKAI…DVIKYIQEHQ (76 aa)) constitute a Carrier domain. Ser-36 bears the O-(pantetheine 4'-phosphoryl)serine mark.

Belongs to the acyl carrier protein (ACP) family. 4'-phosphopantetheine is transferred from CoA to a specific serine of apo-ACP by AcpS. This modification is essential for activity because fatty acids are bound in thioester linkage to the sulfhydryl of the prosthetic group.

The protein localises to the cytoplasm. It participates in lipid metabolism; fatty acid biosynthesis. Functionally, carrier of the growing fatty acid chain in fatty acid biosynthesis. The polypeptide is Acyl carrier protein (Chlamydia trachomatis serovar L2 (strain ATCC VR-902B / DSM 19102 / 434/Bu)).